Reading from the N-terminus, the 1013-residue chain is MDIS1-interacting receptor like kinase 1 (1013 aa).

The first 23 residues, 1 to 23, serve as a signal peptide directing secretion; sequence MKMKIIVLFLYYCYIGSTSSVLA. Residues 24–633 are Extracellular-facing; that stretch reads SIDNVNELSV…SSHSSLHGKR (610 aa). 7 N-linked (GlcNAc...) asparagine glycosylation sites follow: N61, N82, N101, N137, N146, N151, and N155. LRR repeat units follow at residues 70–94, 95–117, 119–137, 139–163, 164–186, 187–213, 215–234, 235–259, 260–283, 284–307, 308–331, 333–355, 357–379, 381–403, 405–426, 427–451, 453–475, 477–498, 499–523, 525–547, 548–571, and 573–595; these read NGNVEKLDLAGMNLTGKISDSISQL, SSLVSFNISCNGFESLLPKSIPP, KSIDISQNSFSGSLFLFSN, SLGLVHLNASGNNLSGNLTEDLGNL, VSLEVLDLRGNFFQGSLPSSFKN, LQKLRFLGLSGNNLTGELPSVLGQLPS, ETAILGYNEFKGPIPPEFGN, INSLKYLDLAIGKLSGEIPSELGKL, KSLETLLLYENNFTGTIPREIGSI, TTLKVLDFSDNALTGEIPMEITKL, KNLQLLNLMRNKLSGSIPPAISSL, QLQVLELWNNTLSGELPSDLGKN, PLQWLDVSSNSFSGEIPSTLCNK, NLTKLILFNNTFTGQIPATLSTC, SLVRVRMQNNLLNGSIPIGFGK, LEKLQRLELAGNRLSGGIPGDISDS, SLSFIDFSRNQIRSSLPSTILSI, NLQAFLVADNFISGEVPDQFQD, CPSLSNLDLSSNTLTGTIPSSIASC, KLVSLNLRNNNLTGEIPRQITTM, SALAVLDLSNNSLTGVLPESIGTS, and ALELLNVSYNKLTGPVPINGFLK. An N-linked (GlcNAc...) asparagine glycan is attached at N199. N271 carries an N-linked (GlcNAc...) asparagine glycan. N-linked (GlcNAc...) asparagine glycosylation occurs at N341. N381, N389, and N417 each carry an N-linked (GlcNAc...) asparagine glycan. N-linked (GlcNAc...) asparagine glycosylation is found at N535, N557, and N578. The chain crosses the membrane as a helical span at residues 634-654; sequence IVAGWLIGIASVLALGILTIV. The Cytoplasmic segment spans residues 655–1013; the sequence is TRTLYKKWYS…FSTSPVNGLL (359 aa). Residue T691 is modified to Phosphothreonine. A Protein kinase domain is found at 699-983; the sequence is IKESNMIGMG…SMLGEAKPRR (285 aa). Residues 705–713 and K728 contribute to the ATP site; that span reads IGMGATGIV. T710 carries the post-translational modification Phosphothreonine; by autocatalysis. Phosphothreonine; by autocatalysis occurs at positions 741 and 742. Phosphotyrosine occurs at positions 777 and 818. The active-site Proton acceptor is the D831. T862 carries the post-translational modification Phosphothreonine; by autocatalysis. Residue S864 is modified to Phosphoserine; by autocatalysis. Y872 is subject to Phosphotyrosine. Y879 is subject to Phosphotyrosine; by autocatalysis. A phosphothreonine; by autocatalysis mark is found at T880 and T992. A disordered region spans residues 976–1013; that stretch reads LGEAKPRRKSNSNEENTSRSLAEKHSSVFSTSPVNGLL. Residues 1002–1013 show a composition bias toward polar residues; it reads SVFSTSPVNGLL.

This sequence belongs to the protein kinase superfamily. Ser/Thr protein kinase family. In terms of assembly, homodimer. Interacts with MDIS1 and LURE1.2. In terms of processing, autophosphorylation induced by the interaction with LURE1.2. In terms of tissue distribution, expressed in pollen tubes.

Its subcellular location is the cell membrane. The enzyme catalyses L-seryl-[protein] + ATP = O-phospho-L-seryl-[protein] + ADP + H(+). It carries out the reaction L-threonyl-[protein] + ATP = O-phospho-L-threonyl-[protein] + ADP + H(+). Its function is as follows. Involved in the regulation of procambium maintenance and polarity during vascular-tissue development. Involved in the pollen tube perception of the female signal. Phosphorylates MDSI1. The sequence is that of MDIS1-interacting receptor like kinase 1 from Arabidopsis thaliana (Mouse-ear cress).